Reading from the N-terminus, the 418-residue chain is Gamma-glutamyl phosphate reductase (418 aa).

It belongs to the gamma-glutamyl phosphate reductase family.

The protein resides in the cytoplasm. It catalyses the reaction L-glutamate 5-semialdehyde + phosphate + NADP(+) = L-glutamyl 5-phosphate + NADPH + H(+). Its pathway is amino-acid biosynthesis; L-proline biosynthesis; L-glutamate 5-semialdehyde from L-glutamate: step 2/2. Its function is as follows. Catalyzes the NADPH-dependent reduction of L-glutamate 5-phosphate into L-glutamate 5-semialdehyde and phosphate. The product spontaneously undergoes cyclization to form 1-pyrroline-5-carboxylate. The sequence is that of Gamma-glutamyl phosphate reductase from Pelobacter propionicus (strain DSM 2379 / NBRC 103807 / OttBd1).